The sequence spans 213 residues: Ribonuclease HII (213 aa).

The region spanning 2 to 213 (GRVAGIDEAG…KEWATWKRLR (212 aa)) is the RNase H type-2 domain. Positions 8, 9, and 113 each coordinate a divalent metal cation.

The protein belongs to the RNase HII family. It depends on Mn(2+) as a cofactor. Requires Mg(2+) as cofactor.

It is found in the cytoplasm. The enzyme catalyses Endonucleolytic cleavage to 5'-phosphomonoester.. In terms of biological role, endonuclease that specifically degrades the RNA of RNA-DNA hybrids. This Thermofilum pendens (strain DSM 2475 / Hrk 5) protein is Ribonuclease HII.